A 148-amino-acid chain; its full sequence is Snaclec 6 (148 aa).

The signal sequence occupies residues 1–23; that stretch reads MGRFIFVSFGLLVMFLSLSGTEA. 3 cysteine pairs are disulfide-bonded: Cys27-Cys38, Cys55-Cys144, and Cys121-Cys136. One can recognise a C-type lectin domain in the interval 34 to 145; sequence YDQNCYKAFE…CSGTHNFVCK (112 aa). N-linked (GlcNAc...) asparagine glycosylation occurs at Asn130.

Belongs to the snaclec family. Heterodimer; disulfide-linked. Expressed by the venom gland.

Its subcellular location is the secreted. Functionally, interferes with one step of hemostasis (modulation of platelet aggregation, or coagulation cascade, for example). The sequence is that of Snaclec 6 from Bitis arietans (African puff adder).